The primary structure comprises 505 residues: Glucan endo-1,3-beta-glucosidase 2 (505 aa).

The signal sequence occupies residues 1 to 20; that stretch reads MASLLHLLLLSLSLLVLASA. An N-linked (GlcNAc...) asparagine glycan is attached at Asn-97. Glu-125 serves as the catalytic Proton donor. N-linked (GlcNAc...) asparagine glycosylation is found at Asn-180 and Asn-262. Catalysis depends on Glu-272, which acts as the Nucleophile. N-linked (GlcNAc...) asparagine glycosylation is found at Asn-304, Asn-361, and Asn-365. A disulfide bridge links Cys-369 with Cys-432. N-linked (GlcNAc...) asparagine glycosylation is found at Asn-461, Asn-466, and Asn-473. Ser-477 carries the GPI-anchor amidated serine lipid modification. Positions 478 to 505 are cleaved as a propeptide — removed in mature form; the sequence is SGIRSDLYYSRGIWSILTVMILNVANIL.

The protein belongs to the glycosyl hydrolase 17 family. Post-translationally, contains two additional disulfide bonds.

The protein localises to the cell membrane. The enzyme catalyses Hydrolysis of (1-&gt;3)-beta-D-glucosidic linkages in (1-&gt;3)-beta-D-glucans.. The protein is Glucan endo-1,3-beta-glucosidase 2 of Arabidopsis thaliana (Mouse-ear cress).